Consider the following 126-residue polypeptide: Holo-[acyl-carrier-protein] synthase (126 aa).

Mg(2+)-binding residues include D8 and E57.

Belongs to the P-Pant transferase superfamily. AcpS family. Requires Mg(2+) as cofactor.

It localises to the cytoplasm. It catalyses the reaction apo-[ACP] + CoA = holo-[ACP] + adenosine 3',5'-bisphosphate + H(+). In terms of biological role, transfers the 4'-phosphopantetheine moiety from coenzyme A to a Ser of acyl-carrier-protein. The chain is Holo-[acyl-carrier-protein] synthase from Trichlorobacter lovleyi (strain ATCC BAA-1151 / DSM 17278 / SZ) (Geobacter lovleyi).